The following is a 126-amino-acid chain: Aspartate 1-decarboxylase (126 aa).

S25 (schiff-base intermediate with substrate; via pyruvic acid) is an active-site residue. S25 bears the Pyruvic acid (Ser) mark. Residue T57 participates in substrate binding. Residue Y58 is the Proton donor of the active site. Substrate is bound at residue 73-75 (GGA).

This sequence belongs to the PanD family. As to quaternary structure, heterooctamer of four alpha and four beta subunits. Pyruvate serves as cofactor. Post-translationally, is synthesized initially as an inactive proenzyme, which is activated by self-cleavage at a specific serine bond to produce a beta-subunit with a hydroxyl group at its C-terminus and an alpha-subunit with a pyruvoyl group at its N-terminus.

The protein resides in the cytoplasm. It carries out the reaction L-aspartate + H(+) = beta-alanine + CO2. Its pathway is cofactor biosynthesis; (R)-pantothenate biosynthesis; beta-alanine from L-aspartate: step 1/1. Its function is as follows. Catalyzes the pyruvoyl-dependent decarboxylation of aspartate to produce beta-alanine. The chain is Aspartate 1-decarboxylase from Xylella fastidiosa (strain Temecula1 / ATCC 700964).